Here is a 224-residue protein sequence, read N- to C-terminus: MPSDYAEIRNRVEHYFDRTATRAWARLTTADEKVSKVRQTVREGRDTMRAVMLSRLPDDLTGCRVMDAGCGTGLTTVELARRGADVVAVDISPQLIDIAKDRLPPELRGKVSFHVGDMADPALGQFDYVVAMDSLIYYRAPDIGRVLTELGKRTHSAIVFTVAPKTAFLMAFWWLGKLFPRSNRSPVMIPHALDKLQRHAGDSLIKIDRVARGFYISECLEYRP.

It belongs to the class I-like SAM-binding methyltransferase superfamily. Magnesium protoporphyrin O-methyltransferase family.

It catalyses the reaction Mg-protoporphyrin IX + S-adenosyl-L-methionine = Mg-protoporphyrin IX 13-monomethyl ester + S-adenosyl-L-homocysteine. The protein operates within porphyrin-containing compound metabolism; bacteriochlorophyll biosynthesis (light-independent). In terms of biological role, converts Mg-protoporphyrin IX to Mg-protoporphyrin IX methylester using S-adenosyl-L-methionine as a cofactor. The polypeptide is Magnesium-protoporphyrin O-methyltransferase (bchM) (Rhodobacter capsulatus (Rhodopseudomonas capsulata)).